The chain runs to 300 residues: Cation-efflux pump FieF (300 aa).

4 helical membrane-spanning segments follow: residues 11-31, 40-60, 81-101, and 114-134; these read LAAV…VFAW, LASL…LLVV, LAAL…ILTG, and PEVG…LVSF. Zn(2+) is bound by residues D45 and D49. Residues H153 and D157 each contribute to the Zn(2+) site. The next 2 membrane-spanning stretches (helical) occupy residues 156–176 and 182–202; these read SDLL…KGIT and FALG…YDAV.

It belongs to the cation diffusion facilitator (CDF) transporter (TC 2.A.4) family. FieF subfamily. As to quaternary structure, homodimer.

Its subcellular location is the cell inner membrane. It carries out the reaction Zn(2+)(in) + H(+)(out) = Zn(2+)(out) + H(+)(in). It catalyses the reaction Cd(2+)(in) + H(+)(out) = Cd(2+)(out) + H(+)(in). The enzyme catalyses Fe(2+)(in) + H(+)(out) = Fe(2+)(out) + H(+)(in). Functionally, divalent metal cation transporter which exports Zn(2+), Cd(2+) and possibly Fe(2+). May be involved in zinc and iron detoxification by efflux. In Pectobacterium atrosepticum (strain SCRI 1043 / ATCC BAA-672) (Erwinia carotovora subsp. atroseptica), this protein is Cation-efflux pump FieF.